The sequence spans 366 residues: 15-cis-zeta-carotene isomerase, chloroplastic (366 aa).

A chloroplast-targeting transit peptide spans 1–45 (MASQLRLHLAATPPLLPHRRPHLARPLCPTLNPIRAPLPPLSRVL). 6 helical membrane passes run 94 to 114 (SWAY…VLWI), 136 to 156 (EVVM…MASL), 171 to 191 (VLFA…FINH), 203 to 223 (GITG…FFLY), 260 to 280 (VIWC…AASV), and 338 to 358 (LPYV…PLMQ).

In terms of tissue distribution, expressed in leaves and roots, and at lower levels in embryos and endosperm.

The protein resides in the plastid. Its subcellular location is the chloroplast membrane. It catalyses the reaction 9,9',15-tri-cis-zeta-carotene = 9,9'-di-cis-zeta-carotene. In terms of biological role, isomerase involved in the biosynthesis of carotenoids. Catalyzes the cis- to trans-conversion of the 15-cis-bond in 9,15,9'-tri-cis-zeta-carotene. The polypeptide is 15-cis-zeta-carotene isomerase, chloroplastic (Zea mays (Maize)).